The chain runs to 102 residues: Iron-sulfur cluster assembly protein CyaY (102 aa).

Belongs to the frataxin family.

Functionally, involved in iron-sulfur (Fe-S) cluster assembly. May act as a regulator of Fe-S biogenesis. This Histophilus somni (strain 2336) (Haemophilus somnus) protein is Iron-sulfur cluster assembly protein CyaY.